A 745-amino-acid polypeptide reads, in one-letter code: DEAD-box ATP-dependent RNA helicase 3A, chloroplastic (745 aa).

A chloroplast-targeting transit peptide spans 1 to 41 (MASLVTLPAIAFSNPATASGAVRLRAAAFRCWALRRRGWAV). The Q motif signature appears at 88-116 (LAIARLGLPDELVATLEKRGITHLFPIQR). One can recognise a Helicase ATP-binding domain in the interval 119–295 (LIPALGGRDL…RRYLNNPLTI (177 aa)). 132-139 (AKTGTGKT) contributes to the ATP binding site. The DEAD box motif lies at 243–246 (DEAD). The region spanning 324–469 (ILSDLITVYA…ISPPSIEEVL (146 aa)) is the Helicase C-terminal domain. A disordered region spans residues 606-724 (LTKISKLPAL…SLGGRESSRS (119 aa)). A compositionally biased stretch (gly residues) spans 641 to 650 (GGGASRGRGG). Basic and acidic residues predominate over residues 656 to 670 (EDRYRRGGRSLRSDN). The span at 687-724 (RSSSSFGGRSSSYGSRGSPSPSFGVRSSSLGGRESSRS) shows a compositional bias: low complexity. The CCHC-type zinc finger occupies 727-744 (GACFNCGESGHRASDCPN).

This sequence belongs to the DEAD box helicase family. DDX21/DDX50 subfamily.

It is found in the plastid. Its subcellular location is the chloroplast. The enzyme catalyses ATP + H2O = ADP + phosphate + H(+). Its function is as follows. Nuclear genome-encoded factor involved in ribosome biogenesis in chloroplasts. Binds specific group II introns in chloroplasts and facilitates their splicing. Required for normal development of chloroplasts. This is DEAD-box ATP-dependent RNA helicase 3A, chloroplastic from Zea mays (Maize).